The following is a 532-amino-acid chain: Phosphoenolpyruvate carboxykinase (ATP) (532 aa).

Residues Arg58, Tyr194, and Lys200 each contribute to the substrate site. Residues Lys200, His220, and 236–244 (GLSGTGKTT) contribute to the ATP site. Residues Lys200 and His220 each coordinate Mn(2+). Asp257 contacts Mn(2+). Residues Glu285, Arg322, 442–443 (RV), and Thr448 contribute to the ATP site. A substrate-binding site is contributed by Arg322.

It belongs to the phosphoenolpyruvate carboxykinase (ATP) family. Requires Mn(2+) as cofactor.

The protein resides in the cytoplasm. It carries out the reaction oxaloacetate + ATP = phosphoenolpyruvate + ADP + CO2. The protein operates within carbohydrate biosynthesis; gluconeogenesis. Its function is as follows. Involved in the gluconeogenesis. Catalyzes the conversion of oxaloacetate (OAA) to phosphoenolpyruvate (PEP) through direct phosphoryl transfer between the nucleoside triphosphate and OAA. In Rubrobacter xylanophilus (strain DSM 9941 / JCM 11954 / NBRC 16129 / PRD-1), this protein is Phosphoenolpyruvate carboxykinase (ATP).